A 278-amino-acid chain; its full sequence is Orotidine 5'-phosphate decarboxylase (278 aa).

Lysine 95 functions as the Proton donor in the catalytic mechanism.

The protein belongs to the OMP decarboxylase family. Type 2 subfamily.

It carries out the reaction orotidine 5'-phosphate + H(+) = UMP + CO2. The protein operates within pyrimidine metabolism; UMP biosynthesis via de novo pathway; UMP from orotate: step 2/2. The sequence is that of Orotidine 5'-phosphate decarboxylase from Methylibium petroleiphilum (strain ATCC BAA-1232 / LMG 22953 / PM1).